A 426-amino-acid chain; its full sequence is C4-dicarboxylate transport protein (426 aa).

8 helical membrane passes run 8–28 (VLYV…HFYP), 44–64 (LIKM…IAGM), 78–98 (LLYF…ATHV), 148–168 (GEIL…ATAG), 173–193 (VVTG…RIIT), 222–242 (LIGT…GIIA), 297–317 (GYSF…LFIA), and 355–375 (AATL…ILGI).

The protein belongs to the dicarboxylate/amino acid:cation symporter (DAACS) (TC 2.A.23) family.

It localises to the cell inner membrane. Functionally, responsible for the transport of dicarboxylates such as succinate, fumarate, and malate from the periplasm across the membrane. This Paraburkholderia xenovorans (strain LB400) protein is C4-dicarboxylate transport protein.